A 260-amino-acid chain; its full sequence is Neuraminyllactose-binding hemagglutinin (260 aa).

A signal peptide spans 1-27 (MKANNHFKDFAWKKCLLGASVVALLVG). Cys-28 is lipidated: N-palmitoyl cysteine. Cys-28 is lipidated: S-diacylglycerol cysteine.

The protein resides in the cell outer membrane. The protein is Neuraminyllactose-binding hemagglutinin (hpaA) of Helicobacter pylori (strain ATCC 700392 / 26695) (Campylobacter pylori).